Consider the following 168-residue polypeptide: Ribosome maturation factor RimM (168 aa).

Residues 94–167 (DGQYYYHQII…FVTVELMEGL (74 aa)) enclose the PRC barrel domain.

Belongs to the RimM family. In terms of assembly, binds ribosomal protein uS19.

The protein resides in the cytoplasm. Its function is as follows. An accessory protein needed during the final step in the assembly of 30S ribosomal subunit, possibly for assembly of the head region. Essential for efficient processing of 16S rRNA. May be needed both before and after RbfA during the maturation of 16S rRNA. It has affinity for free ribosomal 30S subunits but not for 70S ribosomes. This chain is Ribosome maturation factor RimM, found in Limosilactobacillus reuteri (strain DSM 20016) (Lactobacillus reuteri).